Consider the following 514-residue polypeptide: Membrane-bound lytic murein transglycosylase F (514 aa).

A signal peptide spans 1-30 (MKKLKINYLFIGILTLLLAAALWPSIPWFG). The non-LT domain stretch occupies residues 31-269 (KTENHIAAIQ…RIEEKYLGHG (239 aa)). The tract at residues 270-514 (DDFDYVDTRS…LFTPQKKEEK (245 aa)) is LT domain. The active site involves glutamate 314.

It in the N-terminal section; belongs to the bacterial solute-binding protein 3 family. The protein in the C-terminal section; belongs to the transglycosylase Slt family.

The protein resides in the cell outer membrane. The enzyme catalyses Exolytic cleavage of the (1-&gt;4)-beta-glycosidic linkage between N-acetylmuramic acid (MurNAc) and N-acetylglucosamine (GlcNAc) residues in peptidoglycan, from either the reducing or the non-reducing ends of the peptidoglycan chains, with concomitant formation of a 1,6-anhydrobond in the MurNAc residue.. Its function is as follows. Murein-degrading enzyme that degrades murein glycan strands and insoluble, high-molecular weight murein sacculi, with the concomitant formation of a 1,6-anhydromuramoyl product. Lytic transglycosylases (LTs) play an integral role in the metabolism of the peptidoglycan (PG) sacculus. Their lytic action creates space within the PG sacculus to allow for its expansion as well as for the insertion of various structures such as secretion systems and flagella. The chain is Membrane-bound lytic murein transglycosylase F from Salmonella choleraesuis (strain SC-B67).